The chain runs to 217 residues: Small ribosomal subunit protein uS3 (217 aa).

One can recognise a KH type-2 domain in the interval 38–106; that stretch reads VRKYIETALK…RVHINIIEIK (69 aa).

The protein belongs to the universal ribosomal protein uS3 family. Part of the 30S ribosomal subunit. Forms a tight complex with proteins S10 and S14.

In terms of biological role, binds the lower part of the 30S subunit head. Binds mRNA in the 70S ribosome, positioning it for translation. The chain is Small ribosomal subunit protein uS3 from Lysinibacillus sphaericus (strain C3-41).